We begin with the raw amino-acid sequence, 209 residues long: Octanoyltransferase (209 aa).

Residues 29 to 209 enclose the BPL/LPL catalytic domain; it reads EHTPDELWVV…CHQLQPEIDS (181 aa). Substrate-binding positions include 71–78, 138–140, and 151–153; these read RGGQVTYH, SLG, and GLA. Cys169 serves as the catalytic Acyl-thioester intermediate.

The protein belongs to the LipB family.

It is found in the cytoplasm. The enzyme catalyses octanoyl-[ACP] + L-lysyl-[protein] = N(6)-octanoyl-L-lysyl-[protein] + holo-[ACP] + H(+). The protein operates within protein modification; protein lipoylation via endogenous pathway; protein N(6)-(lipoyl)lysine from octanoyl-[acyl-carrier-protein]: step 1/2. Catalyzes the transfer of endogenously produced octanoic acid from octanoyl-acyl-carrier-protein onto the lipoyl domains of lipoate-dependent enzymes. Lipoyl-ACP can also act as a substrate although octanoyl-ACP is likely to be the physiological substrate. The sequence is that of Octanoyltransferase from Hydrogenovibrio crunogenus (strain DSM 25203 / XCL-2) (Thiomicrospira crunogena).